Here is a 471-residue protein sequence, read N- to C-terminus: Putative multidrug resistance protein MdtD (471 aa).

At 1 to 11 (MTDLPDSTRWQ) the chain is on the periplasmic side. Residues 12-32 (LWIVAFGFFMQSLDTTIVNTA) form a helical membrane-spanning segment. Residues 33–48 (LPSMAQSLGESPLHMH) are Cytoplasmic-facing. A helical transmembrane segment spans residues 49–69 (MVIVSYVLTVAVMLPASGWLA). Residues 70–76 (DKVGVRN) lie on the Periplasmic side of the membrane. Residues 77–97 (IFFTAIVLFTLGSLFCALSGT) form a helical membrane-spanning segment. Residues 98–101 (LNEL) lie on the Cytoplasmic side of the membrane. Residues 102-124 (LLARALQGVGGAMMVPVGRLTVM) traverse the membrane as a helical segment. The Periplasmic segment spans residues 125 to 137 (KIVPREQYMAAMT). The chain crosses the membrane as a helical span at residues 138–158 (FVTLPGQVGPLLGPALGGLLV). At 159–164 (EYASWH) the chain is on the cytoplasmic side. A helical membrane pass occupies residues 165 to 185 (WIFLINIPVGIIGAIATLMLM). At 186 to 196 (PNYTMQTRRFD) the chain is on the periplasmic side. Residues 197–217 (LSGFLLLAVGMAVLTLALDGS) traverse the membrane as a helical segment. The Cytoplasmic segment spans residues 218–224 (KGTGLSP). A helical transmembrane segment spans residues 225–245 (LAIAGLVAVGVVALVLYLLHA). The Periplasmic segment spans residues 246-262 (RNNNRALFSLKLFRTRT). Residues 263–283 (FSLGLAGSFAGRIGSGMLPFM) traverse the membrane as a helical segment. The Cytoplasmic portion of the chain corresponds to 284–285 (TP). The chain crosses the membrane as a helical span at residues 286-306 (VFLQIGLGFSPFHAGLMMIPM). The Periplasmic portion of the chain corresponds to 307–341 (VLGSMGMKRIVVQVVNRFGYRRVLVATTLGLSLVT). The helical transmembrane segment at 342–362 (LLFMTTALLGWYYVLPFVLFL) threads the bilayer. Residues 363–395 (QGMVNSTRFSSMNTLTLKDLPDNLASSGNSLLS) lie on the Cytoplasmic side of the membrane. Residues 396–416 (MIMQLSMSIGVTIAGLLLGLF) form a helical membrane-spanning segment. The Periplasmic portion of the chain corresponds to 417–430 (GSQHVSVDSGTTQT). Residues 431 to 451 (VFMYTWLSMAFIIALPAFIFA) traverse the membrane as a helical segment. Topologically, residues 452–471 (RVPNDTHQNVAISRRKRSAQ) are cytoplasmic.

This sequence belongs to the major facilitator superfamily. TCR/Tet family.

Its subcellular location is the cell inner membrane. The protein is Putative multidrug resistance protein MdtD of Escherichia coli (strain SMS-3-5 / SECEC).